The following is a 478-amino-acid chain: Elongation factor Tu, chloroplastic (478 aa).

Positions 1-29 are enriched in low complexity; it reads MASISAATATSSTKLVSSNSTNPLLPSST. The disordered stretch occupies residues 1-31; that stretch reads MASISAATATSSTKLVSSNSTNPLLPSSTKP. The N-terminal 69 residues, 1-69, are a transit peptide targeting the chloroplast; that stretch reads MASISAATAT…THRHRRFTVR (69 aa). The 205-residue stretch at 79–283 folds into the tr-type G domain; sequence KPHVNIGTIG…AVDSYIPIPV (205 aa). Residues 88-95 are G1; it reads GHVDHGKT. 88–95 contributes to the GTP binding site; sequence GHVDHGKT. The segment at 129–133 is G2; it reads GITIN. Residues 150–153 are G3; it reads DCPG. GTP is bound by residues 150–154 and 205–208; these read DCPGH and NKQD. Positions 205 to 208 are G4; it reads NKQD. The segment at 243 to 245 is G5; it reads SAL.

It belongs to the TRAFAC class translation factor GTPase superfamily. Classic translation factor GTPase family. EF-Tu/EF-1A subfamily.

Its subcellular location is the plastid. The protein resides in the chloroplast. Its function is as follows. This protein promotes the GTP-dependent binding of aminoacyl-tRNA to the A-site of ribosomes during protein biosynthesis. This is Elongation factor Tu, chloroplastic (TUFA) from Nicotiana tabacum (Common tobacco).